The chain runs to 172 residues: MSSKRAKAKTTKKRPQRATSNVFAMFDQSQIQEFKEAFNMIDQNRDGFIDKEDLHDMLASMGKNPTDEYLEGMMSEAPGPINFTMFLTMFGEKLNGTDPEDVIRNAFACFDEEASGFIHEDHLRELLTTMGDRFTDEEVDEMYREAPIDKKGNFNYVEFTRILKHGAKDKDD.

Positions 1–16 (MSSKRAKAKTTKKRPQ) are enriched in basic residues. The tract at residues 1–20 (MSSKRAKAKTTKKRPQRATS) is disordered. Ser-2 bears the N-acetylserine mark. 3 consecutive EF-hand domains span residues 29–64 (SQIQEFKEAFNMIDQNRDGFIDKEDLHDMLASMGKN), 98–133 (DPEDVIRNAFACFDEEASGFIHEDHLRELLTTMGDR), and 134–169 (FTDEEVDEMYREAPIDKKGNFNYVEFTRILKHGAKD). Ca(2+) contacts are provided by Asp-42, Asn-44, Asp-46, and Asp-53.

In terms of assembly, myosin is a hexamer of 2 heavy chains and 4 light chains.

Its function is as follows. Myosin regulatory subunit that plays an important role in regulation of both smooth muscle and nonmuscle cell contractile activity. Implicated in cytokinesis, receptor capping, and cell locomotion. The protein is Myosin regulatory light chain 2, smooth muscle major isoform of Gallus gallus (Chicken).